The sequence spans 77 residues: Sec-independent protein translocase protein TatA (77 aa).

Residues 1–21 traverse the membrane as a helical segment; it reads MGSFSIWHWLIVLVIVMLVFG. The disordered stretch occupies residues 50–77; that stretch reads ADASTQQKISGGQTLEGEAREKVEKTHS. The segment covering 53-62 has biased composition (polar residues); the sequence is STQQKISGGQ. A compositionally biased stretch (basic and acidic residues) spans 66–77; the sequence is GEAREKVEKTHS.

This sequence belongs to the TatA/E family. As to quaternary structure, the Tat system comprises two distinct complexes: a TatABC complex, containing multiple copies of TatA, TatB and TatC subunits, and a separate TatA complex, containing only TatA subunits. Substrates initially bind to the TatABC complex, which probably triggers association of the separate TatA complex to form the active translocon.

The protein resides in the cell inner membrane. Its function is as follows. Part of the twin-arginine translocation (Tat) system that transports large folded proteins containing a characteristic twin-arginine motif in their signal peptide across membranes. TatA could form the protein-conducting channel of the Tat system. The polypeptide is Sec-independent protein translocase protein TatA (Azoarcus sp. (strain BH72)).